Here is an 88-residue protein sequence, read N- to C-terminus: Small ribosomal subunit protein bS20 (88 aa).

The protein belongs to the bacterial ribosomal protein bS20 family.

In terms of biological role, binds directly to 16S ribosomal RNA. The polypeptide is Small ribosomal subunit protein bS20 (Chelativorans sp. (strain BNC1)).